The chain runs to 419 residues: Protein farnesyltransferase subunit beta (419 aa).

5 PFTB repeats span residues 68–109 (EDNT…ITLG), 119–160 (RNKL…SVLN), 167–208 (IKNV…ILIG), 215–256 (LPRL…ALLQ), and 329–371 (SIAL…SLCQ). Residues 193 to 196 (HGGY) and 235 to 238 (RTNK) each bind (2E,6E)-farnesyl diphosphate. Positions 241 and 243 each coordinate Zn(2+). 244–247 (YSFW) is a (2E,6E)-farnesyl diphosphate binding site. Histidine 359 provides a ligand contact to Zn(2+).

Belongs to the protein prenyltransferase subunit beta family. In terms of assembly, heterodimer of FTA and FTB. The cofactor is Zn(2+).

The enzyme catalyses L-cysteinyl-[protein] + (2E,6E)-farnesyl diphosphate = S-(2E,6E)-farnesyl-L-cysteinyl-[protein] + diphosphate. In terms of biological role, catalyzes the transfer of a farnesyl moiety from farnesyl diphosphate to a cysteine at the fourth position from the C-terminus of several proteins. The beta subunit FTB is responsible for peptide-binding. The polypeptide is Protein farnesyltransferase subunit beta (FTB) (Pisum sativum (Garden pea)).